The following is a 326-amino-acid chain: MRIFPVFLLTFSLFLIKEEIVTAEVKVSAPVVNQSGIKLNLERQFTGSDVAINRIHFSPDGQFLLTAAADGVGTLWTKEGEMLGQLQGQKPPMFNARLSPDRQILITTGYDGTIRLWNLQGELLEEQQPHRAAVADAIFSPDSQIIVTCSDDGQTKIFTRQGQEIASVLKSGTARNLAYHPQGLLIASVSDSGSLHLINPNGKIEREISTGQGRINNVNFSPNGEQLLTSGINGSAKLWNLAGELIHEYKVVPTGWVNSAQFYPKGEWLATASDDGTIRFWQKDGQLIYELPLVNARLTSLSFSPDGKQLAATSSQGQVWVFNLSY.

WD repeat units lie at residues 47–77 (GSDVAINRIHFSPDGQFLLTAAADGVGTLWT), 88–118 (GQKPPMFNARLSPDRQILITTGYDGTIRLWN), 129–159 (PHRAAVADAIFSPDSQIIVTCSDDGQTKIFT), 169–199 (LKSGTARNLAYHPQGLLIASVSDSGSLHLIN), 210–240 (TGQGRINNVNFSPNGEQLLTSGINGSAKLWN), and 252–282 (VPTGWVNSAQFYPKGEWLATASDDGTIRFWQ).

This is WD repeat-containing protein slr1409 from Synechocystis sp. (strain ATCC 27184 / PCC 6803 / Kazusa).